The following is a 73-amino-acid chain: uncharacterized protein (73 aa).

An N-terminal signal peptide occupies residues 1–21 (MTLFSSLSSLSTGSLKSSVSS). A compositionally biased stretch (low complexity) spans 1-38 (MTLFSSLSSLSTGSLKSSVSSIETGSSSGSFGSNETSG). Residues 1–43 (MTLFSSLSSLSTGSLKSSVSSIETGSSSGSFGSNETSGWGSHH) are disordered. The N-linked (GlcNAc...) asparagine glycan is linked to asparagine 34.

The protein resides in the secreted. This is an uncharacterized protein from Dictyostelium discoideum (Social amoeba).